A 341-amino-acid polypeptide reads, in one-letter code: Serpentine receptor class beta-3 (341 aa).

Residues 1-23 lie on the Extracellular side of the membrane; that stretch reads MLETNDSVCELAYQLAYHPVYRS. Residue Asn5 is glycosylated (N-linked (GlcNAc...) asparagine). A helical membrane pass occupies residues 24-44; it reads SQFWSMLVSSLSIPALIYFIT. Residues 45 to 58 lie on the Cytoplasmic side of the membrane; that stretch reads RKIFFLHFHGNLKC. Residues 59-79 traverse the membrane as a helical segment; that stretch reads LLIVYFICNLLFSMALCFAFF. At 80–103 the chain is on the extracellular side; it reads YQFLIPFFVTSKCQLLINTTLFKW. Asn97 carries N-linked (GlcNAc...) asparagine glycosylation. A helical membrane pass occupies residues 104–124; it reads GQICSFLLLTSSMLLPIGFSI. Topologically, residues 125–141 are cytoplasmic; sequence ERFVALGNAQKYESSRT. A helical membrane pass occupies residues 142 to 162; the sequence is FLGPVIIFIIIAVDFSIIFSV. Residues 163–187 are Extracellular-facing; the sequence is YKNEPFTEGFYSFILVPSTTASQIN. The helical transmembrane segment at 188-208 threads the bilayer; that stretch reads MYFFVLLFVKIFNLLLNCILL. Topologically, residues 209-237 are cytoplasmic; that stretch reads RIHKKIRIKYYSLSVRYEMEEILQSSKFT. The chain crosses the membrane as a helical span at residues 238–258; the sequence is FIIRFTHLLFFGFYVVVILFV. The Extracellular segment spans residues 259-276; sequence RIMGESFFNGTLNYSVAR. 2 N-linked (GlcNAc...) asparagine glycosylation sites follow: Asn267 and Asn271. The chain crosses the membrane as a helical span at residues 277–297; that stretch reads GVFCTVPTYNLIIVIIGIKSL. Residues 298-341 lie on the Cytoplasmic side of the membrane; the sequence is RHLNLQRLNKVQSTVQIKSTGKEGSKNYEDIITNYWDSVSSRTP.

This sequence belongs to the nematode receptor-like protein srb family. Expressed throughout the head.

It localises to the cell membrane. Its subcellular location is the perikaryon. The protein localises to the cell projection. It is found in the dendrite. G-protein coupled receptor. This Caenorhabditis elegans protein is Serpentine receptor class beta-3.